A 251-amino-acid chain; its full sequence is MSHIRRMPKRTDTLALFDVDGTLTPSRCKASHETLEFLRRLRDEVFTGIVGGSDLVKQEEQLGPTILEDFDYVFSENGLVAYEKGKLIHVQSLAKHLGEEKLKNVINCCLRYIADLDIPLKRGTFVEFRKGMLNVSPIGRNCSQQEREEFEKYDRVHSIRSRFVDYLKERFEGYDLQFSIGGQISFDVFPRGWDKTYCLSFVKHIPVIHFFGDKTFLGGNDYEIFQDARTIGHSVTSPEDTVKQCQQLFNL.

The active-site Nucleophile is the Asp18. Asp18 and Asp20 together coordinate Mg(2+). The active-site Proton donor/acceptor is Asp20. Alpha-D-mannose 1-phosphate-binding residues include Arg27, Arg129, Arg140, Arg147, Ser185, and Asp187. Mg(2+) is bound by residues Asp213, Phe225, Asp227, and Thr230.

It belongs to the eukaryotic PMM family. As to quaternary structure, homodimer. Mg(2+) serves as cofactor.

It localises to the cytoplasm. The enzyme catalyses alpha-D-mannose 1-phosphate = D-mannose 6-phosphate. The protein operates within nucleotide-sugar biosynthesis; GDP-alpha-D-mannose biosynthesis; alpha-D-mannose 1-phosphate from D-fructose 6-phosphate: step 2/2. In terms of biological role, catalyzes the interconversion of mannose-6-phosphate to mannose-1-phosphate, the precursor for the synthesis of GDP-mannose. GDP-mannose is an essential sugar nucleotide for the synthesis of D-mannose-containing cell wall polysaccharides (galactomannans and glucomannans), glycolipids, glycoproteins and the antioxidant L-ascorbate. The sequence is that of Phosphomannomutase from Galdieria sulphuraria (Red alga).